Here is a 318-residue protein sequence, read N- to C-terminus: Decaprenyl-phosphate phosphoribosyltransferase (318 aa).

2 consecutive transmembrane segments (helical) span residues 33–53 (WIKN…GIEY) and 59–79 (AAKV…IYLI). Residues Lys35 and Tyr77 each contribute to the 5-phospho-alpha-D-ribose 1-diphosphate site. Mg(2+) contacts are provided by Asn80 and Asp84. A 5-phospho-alpha-D-ribose 1-diphosphate-binding site is contributed by Lys94. The next 2 helical transmembrane spans lie at 99 to 119 (IAAG…LAVA) and 121 to 141 (LVIS…YIAV). Positions 150 and 167 each coordinate 5-phospho-alpha-D-ribose 1-diphosphate. The next 2 helical transmembrane spans lie at 153 to 173 (AVLD…AGGV) and 177 to 197 (IPLS…MAAG). Lys198 serves as a coordination point for trans,octa-cis-decaprenyl phosphate. The next 3 helical transmembrane spans lie at 225 to 245 (LRFV…LWAF), 262 to 282 (SWYA…AVDI), and 298 to 318 (RVLQ…IYFS).

This sequence belongs to the UbiA prenyltransferase family. DPPR synthase subfamily. It depends on Mg(2+) as a cofactor.

It localises to the cell inner membrane. The catalysed reaction is trans,octa-cis-decaprenyl phosphate + 5-phospho-alpha-D-ribose 1-diphosphate + H(+) = trans,octa-cis-decaprenylphospho-beta-D-ribofuranose 5-phosphate + diphosphate. It participates in cell wall biogenesis; cell wall polysaccharide biosynthesis. In terms of biological role, involved in the biosynthesis of decaprenylphosphoryl arabinose (DPA) a precursor for arabinan synthesis in mycobacterial cell wall biosynthesis. Catalyzes the transfer of a 5-phosphoribosyl residue from phosphoribose diphosphate (PRPP) to decaprenyl phosphate (DP) to form decaprenylphosphoryl-5-phosphoribose (DPPR). In Mycolicibacterium smegmatis (strain ATCC 700084 / mc(2)155) (Mycobacterium smegmatis), this protein is Decaprenyl-phosphate phosphoribosyltransferase.